Here is a 206-residue protein sequence, read N- to C-terminus: Ribosome maturation factor RimP (206 aa).

This sequence belongs to the RimP family.

The protein resides in the cytoplasm. Its function is as follows. Required for maturation of 30S ribosomal subunits. This chain is Ribosome maturation factor RimP, found in Paracoccus denitrificans (strain Pd 1222).